The sequence spans 239 residues: MNIVVATHNEGKLVEIRDILAEEFGDGAHDIELVSAGSLGLPDPVETGITFEANALLKARFVARLTGLPAIADDSGLIVDVMGNAPGILSARWAGEHGNDAANIDLLLAQIEDIPDDDRTARFRCAAALVVPIAAEEDVADFEADPSDGMDDGDGLVDARETVVLGEMPGTIVRHPHGSNGFGYDPIFMPDEQPAGAEESGELLTSAEMTPEQKNAISHRGKALRALMPAIRELVETGE.

7–12 (THNEGK) contributes to the substrate binding site. Aspartate 74 (proton acceptor) is an active-site residue. Position 74 (aspartate 74) interacts with Mg(2+). Substrate contacts are provided by residues serine 75, 182 to 185 (FGYD), lysine 214, and 219 to 220 (HR).

Belongs to the HAM1 NTPase family. In terms of assembly, homodimer. Mg(2+) is required as a cofactor.

The catalysed reaction is XTP + H2O = XMP + diphosphate + H(+). The enzyme catalyses dITP + H2O = dIMP + diphosphate + H(+). It carries out the reaction ITP + H2O = IMP + diphosphate + H(+). Its function is as follows. Pyrophosphatase that catalyzes the hydrolysis of nucleoside triphosphates to their monophosphate derivatives, with a high preference for the non-canonical purine nucleotides XTP (xanthosine triphosphate), dITP (deoxyinosine triphosphate) and ITP. Seems to function as a house-cleaning enzyme that removes non-canonical purine nucleotides from the nucleotide pool, thus preventing their incorporation into DNA/RNA and avoiding chromosomal lesions. This chain is dITP/XTP pyrophosphatase, found in Bifidobacterium animalis subsp. lactis (strain AD011).